The primary structure comprises 161 residues: Transcription elongation factor GreA (161 aa).

The stretch at 8–28 forms a coiled coil; sequence LTQEGFKQLEKELENLIQVKR.

The protein belongs to the GreA/GreB family.

In terms of biological role, necessary for efficient RNA polymerase transcription elongation past template-encoded arresting sites. The arresting sites in DNA have the property of trapping a certain fraction of elongating RNA polymerases that pass through, resulting in locked ternary complexes. Cleavage of the nascent transcript by cleavage factors such as GreA or GreB allows the resumption of elongation from the new 3'terminus. GreA releases sequences of 2 to 3 nucleotides. The chain is Transcription elongation factor GreA from Mycoplasma genitalium (strain ATCC 33530 / DSM 19775 / NCTC 10195 / G37) (Mycoplasmoides genitalium).